The following is a 378-amino-acid chain: 23S rRNA (uracil(747)-C(5))-methyltransferase RlmC (378 aa).

[4Fe-4S] cluster contacts are provided by Cys3, Cys11, Cys14, and Cys87. Positions 212, 241, 262, and 309 each coordinate S-adenosyl-L-methionine. The active-site Nucleophile is the Cys336.

This sequence belongs to the class I-like SAM-binding methyltransferase superfamily. RNA M5U methyltransferase family. RlmC subfamily.

It catalyses the reaction uridine(747) in 23S rRNA + S-adenosyl-L-methionine = 5-methyluridine(747) in 23S rRNA + S-adenosyl-L-homocysteine + H(+). Functionally, catalyzes the formation of 5-methyl-uridine at position 747 (m5U747) in 23S rRNA. In Shewanella pealeana (strain ATCC 700345 / ANG-SQ1), this protein is 23S rRNA (uracil(747)-C(5))-methyltransferase RlmC.